The primary structure comprises 371 residues: tRNA-specific 2-thiouridylase MnmA (371 aa).

ATP is bound by residues 24–31 and L50; that span reads AMSGGVDS. C120 serves as the catalytic Nucleophile. An intrachain disulfide couples C120 to C216. G144 is a binding site for ATP. The segment at 166–168 is interaction with tRNA; the sequence is KDQ. The Cysteine persulfide intermediate role is filled by C216.

The protein belongs to the MnmA/TRMU family.

The protein resides in the cytoplasm. The catalysed reaction is S-sulfanyl-L-cysteinyl-[protein] + uridine(34) in tRNA + AH2 + ATP = 2-thiouridine(34) in tRNA + L-cysteinyl-[protein] + A + AMP + diphosphate + H(+). Its function is as follows. Catalyzes the 2-thiolation of uridine at the wobble position (U34) of tRNA, leading to the formation of s(2)U34. The polypeptide is tRNA-specific 2-thiouridylase MnmA (Wolbachia sp. subsp. Brugia malayi (strain TRS)).